Reading from the N-terminus, the 266-residue chain is Hydroxyethylthiazole kinase (266 aa).

Met-43 contributes to the substrate binding site. Positions 119 and 166 each coordinate ATP. Gly-193 is a binding site for substrate.

Belongs to the Thz kinase family. It depends on Mg(2+) as a cofactor.

It carries out the reaction 5-(2-hydroxyethyl)-4-methylthiazole + ATP = 4-methyl-5-(2-phosphooxyethyl)-thiazole + ADP + H(+). Its pathway is cofactor biosynthesis; thiamine diphosphate biosynthesis; 4-methyl-5-(2-phosphoethyl)-thiazole from 5-(2-hydroxyethyl)-4-methylthiazole: step 1/1. Functionally, catalyzes the phosphorylation of the hydroxyl group of 4-methyl-5-beta-hydroxyethylthiazole (THZ). The polypeptide is Hydroxyethylthiazole kinase (Methanococcus maripaludis (strain C5 / ATCC BAA-1333)).